An 863-amino-acid polypeptide reads, in one-letter code: Alanine--tRNA ligase (863 aa).

The Zn(2+) site is built by His-552, His-556, Cys-654, and His-658.

It belongs to the class-II aminoacyl-tRNA synthetase family. Zn(2+) is required as a cofactor.

The protein resides in the cytoplasm. It catalyses the reaction tRNA(Ala) + L-alanine + ATP = L-alanyl-tRNA(Ala) + AMP + diphosphate. Functionally, catalyzes the attachment of alanine to tRNA(Ala) in a two-step reaction: alanine is first activated by ATP to form Ala-AMP and then transferred to the acceptor end of tRNA(Ala). Also edits incorrectly charged Ser-tRNA(Ala) and Gly-tRNA(Ala) via its editing domain. This is Alanine--tRNA ligase from Nitrosomonas europaea (strain ATCC 19718 / CIP 103999 / KCTC 2705 / NBRC 14298).